We begin with the raw amino-acid sequence, 100 residues long: Large ribosomal subunit protein uL23 (100 aa).

The protein belongs to the universal ribosomal protein uL23 family. In terms of assembly, part of the 50S ribosomal subunit. Contacts protein L29, and trigger factor when it is bound to the ribosome.

Functionally, one of the early assembly proteins it binds 23S rRNA. One of the proteins that surrounds the polypeptide exit tunnel on the outside of the ribosome. Forms the main docking site for trigger factor binding to the ribosome. The polypeptide is Large ribosomal subunit protein uL23 (Yersinia pestis bv. Antiqua (strain Antiqua)).